The chain runs to 179 residues: Adenine phosphoribosyltransferase (179 aa).

The protein belongs to the purine/pyrimidine phosphoribosyltransferase family. Homodimer.

Its subcellular location is the cytoplasm. The enzyme catalyses AMP + diphosphate = 5-phospho-alpha-D-ribose 1-diphosphate + adenine. It participates in purine metabolism; AMP biosynthesis via salvage pathway; AMP from adenine: step 1/1. Catalyzes a salvage reaction resulting in the formation of AMP, that is energically less costly than de novo synthesis. The protein is Adenine phosphoribosyltransferase of Gluconobacter oxydans (strain 621H) (Gluconobacter suboxydans).